A 334-amino-acid polypeptide reads, in one-letter code: MKPKVLITRKIPENGIKMLREHFEVEVWEDEHEISREVLLEKVRDVDALVTMLSERIDAEVFDAAPRLKIVANYAVGYDNIDIEEATKMGVYITNTPDVLTNATADMAWVLLLATARRLIEADKFVRSGEWKKRGVAWHPLMFLGYDVYGRTIGIVGFGRIGQAIARRAKGFGMRILYNSRTRKPEVEKELGAEFMPLDELLKESDFVVLVVPLTKETYHMINEERLKLMKPTAILVNIARGKVVDTEALVKALREGWIAGAGLDVFEEEPYYHEELFSLDNVVLAPHIGSATYGAREGMAELVARNLIAFKNGEVPPTLVNREVLNVRKPGFE.

Residues 158–161 (FGRI), 180–182 (SRT), and 239–241 (IAR) each bind NADP(+). Active-site residues include Arg241 and Glu270. His288 functions as the Proton donor in the catalytic mechanism. 288–290 (HIG) provides a ligand contact to NADP(+).

The protein belongs to the D-isomer specific 2-hydroxyacid dehydrogenase family. GyaR subfamily. In terms of assembly, homodimer.

The protein localises to the cytoplasm. The catalysed reaction is glycolate + NAD(+) = glyoxylate + NADH + H(+). In Thermococcus onnurineus (strain NA1), this protein is Glyoxylate reductase.